Consider the following 95-residue polypeptide: Small ribosomal subunit protein bS6 (95 aa).

Belongs to the bacterial ribosomal protein bS6 family.

Its function is as follows. Binds together with bS18 to 16S ribosomal RNA. The polypeptide is Small ribosomal subunit protein bS6 (Onion yellows phytoplasma (strain OY-M)).